A 1136-amino-acid polypeptide reads, in one-letter code: Probable phospholipid-transporting ATPase IIB (1136 aa).

Residues 1–145 (MADQIPLYPV…IKNQKYNIFT (145 aa)) lie on the Cytoplasmic side of the membrane. Residues 146 to 166 (FIPGVLYEQFKFFLNLYFLIV) traverse the membrane as a helical segment. Residues 167–174 (SCSQFVPA) are Extracellular-facing. Residues 175–195 (LKIGYLYTYWAPLGFVLAVTI) traverse the membrane as a helical segment. The Cytoplasmic segment spans residues 196-383 (MREAVDEFRR…LDLELNQLTK (188 aa)). A helical transmembrane segment spans residues 384–404 (ALFLALVALSVVMVTLQGFAG). The Extracellular segment spans residues 405 to 408 (PWYR). The chain crosses the membrane as a helical span at residues 409–429 (SLFRFLLLFSYIIPISLRVNL). The Cytoplasmic portion of the chain corresponds to 430-939 (DMGKAAYGWM…ALGQFVMHRG (510 aa)). Asp-469 serves as the catalytic 4-aspartylphosphate intermediate. ATP is bound by residues Asp-469, Lys-470, and Thr-471. A Mg(2+)-binding site is contributed by Asp-469. Thr-471 serves as a coordination point for Mg(2+). Positions 514-538 (AGGSSAASTPPRKAPSSAPKVRRSV) are disordered. ATP contacts are provided by Glu-591, Phe-633, Lys-638, Lys-657, Arg-686, Thr-687, Thr-766, Gly-767, Asp-768, Arg-848, and Lys-854. Residue Asp-874 participates in Mg(2+) binding. Residues Asn-877 and Asp-878 each contribute to the ATP site. Residue Asp-878 participates in Mg(2+) binding. Residues 940-960 (LIISTMQAVFSSVFYFASVPL) traverse the membrane as a helical segment. At 961-962 (YQ) the chain is on the extracellular side. A helical transmembrane segment spans residues 963 to 983 (GFLMVGYATVYTMFPVFSLVL). Residues 984–1012 (DQDVKPEMAMLYPELYKDLTKGRSLSFKT) are Cytoplasmic-facing. Residues 1013-1033 (FLVWVLISIYQGGILMFGALV) traverse the membrane as a helical segment. Topologically, residues 1034–1041 (LFESEFVH) are extracellular. Residues 1042–1062 (VVAISFTALVLTELLMVALTV) traverse the membrane as a helical segment. The Cytoplasmic segment spans residues 1063 to 1066 (RTWH). A helical membrane pass occupies residues 1067 to 1087 (WLMVVAQLLSLGCYVASLAFL). Residues 1088-1098 (NEYFDVAFITT) lie on the Extracellular side of the membrane. A helical transmembrane segment spans residues 1099-1119 (VTFVWKVSAITVVSCLPLYVL). At 1120 to 1136 (KYLKRKLSPPSYSKLSS) the chain is on the cytoplasmic side.

Belongs to the cation transport ATPase (P-type) (TC 3.A.3) family. Type IV subfamily. Mg(2+) is required as a cofactor.

Its subcellular location is the golgi apparatus. It localises to the trans-Golgi network membrane. The catalysed reaction is ATP + H2O + phospholipidSide 1 = ADP + phosphate + phospholipidSide 2.. This chain is Probable phospholipid-transporting ATPase IIB (ATP9B), found in Bos taurus (Bovine).